A 2171-amino-acid polypeptide reads, in one-letter code: Mediator of DNA damage checkpoint protein 1 (2171 aa).

The segment covering 1–19 (MEDTQAIDWDVEEEEETEQ) has biased composition (acidic residues). Residues 1–22 (MEDTQAIDWDVEEEEETEQSSE) form a disordered region. The segment at 1 to 150 (MEDTQAIDWD…SRGPLTVEET (150 aa)) is interaction with CHEK2. The tract at residues 2–220 (EDTQAIDWDV…PFAFNLNSDT (219 aa)) is interaction with the MRN complex. Position 4 is a phosphothreonine (Thr4). Residues 54 to 105 (NVVGRMPDCSVALPFPSISKQHAEIEILAWDKAPILRDCGSLNGTQILRPPK) form the FHA domain. Ser108 is modified (phosphoserine). The required for nuclear localization (NLS1) stretch occupies residues 145-568 (LTVEETPRVQ…PAKLLVVSLE (424 aa)). Thr146 is subject to Phosphothreonine. A phosphoserine mark is found at Ser168, Ser176, Ser196, and Ser218. Disordered regions lie at residues 185–248 (RTTS…AKQS) and 261–317 (DQPL…AEVH). Thr220 is subject to Phosphothreonine. Over residues 261–278 (DQPLVKERDDDTKVKRGA) the composition is skewed to basic and acidic residues. Residue Ser299 is modified to Phosphoserine. Residue Thr301 is modified to Phosphothreonine. Residues 306–317 (DSRPPGRPAEVH) show a composition bias toward basic and acidic residues. Position 329 is a phosphoserine (Ser329). A Phosphothreonine modification is found at Thr331. The tract at residues 355–387 (GVGTRGPGAPGLAHLQESQAGSDTDVEEGKAPQ) is disordered. Phosphoserine is present on residues Ser372 and Ser376. Thr378 bears the Phosphothreonine mark. 3 positions are modified to phosphoserine: Ser394, Ser397, and Ser402. Residue Thr404 is modified to Phosphothreonine. Ser411 is modified (phosphoserine). Disordered stretches follow at residues 443–469 (QRSQ…NREA) and 481–522 (VRAH…VDIN). Position 449 is a phosphothreonine (Thr449). Ser453 is modified (phosphoserine). Phosphothreonine is present on Thr455. A phosphoserine mark is found at Ser485, Ser495, Ser498, Ser504, Ser505, and Ser513. The segment covering 513–522 (SQASTTVDIN) has biased composition (polar residues). The residue at position 523 (Thr523) is a Phosphothreonine. Phosphoserine is present on Ser590. Lys616 is covalently cross-linked (Glycyl lysine isopeptide (Lys-Gly) (interchain with G-Cter in SUMO1); alternate). Residue Lys616 forms a Glycyl lysine isopeptide (Lys-Gly) (interchain with G-Cter in SUMO2); alternate linkage. Disordered regions lie at residues 653–689 (DTLG…DNYG) and 780–1969 (SPPR…TKLN). Positions 671–685 (GREREQHVGGTKDSE) are enriched in basic and acidic residues. 2 positions are modified to phosphoserine: Ser780 and Ser793. Lys812 is subject to N6-acetyllysine. 4 stretches are compositionally biased toward basic and acidic residues: residues 819 to 844 (ETAE…ERQT), 851 to 862 (ELTKGKQDREQK), 868 to 905 (DTQR…EKQV), and 914 to 951 (AFER…RGEP). 2 positions are modified to phosphoserine: Ser955 and Ser998. The segment covering 955–964 (SQDQKGQASS) has biased composition (polar residues). Positions 1016–1031 (KASRIRAAEKVSRGDQ) are enriched in basic and acidic residues. Ser1033 is subject to Phosphoserine. Residues 1040-1051 (PTVPEAPAPPQK) show a composition bias toward pro residues. Residues Ser1068 and Ser1086 each carry the phosphoserine modification. Over residues 1103–1113 (PKPKIRTRKSS) the composition is skewed to basic residues. 2 stretches are compositionally biased toward polar residues: residues 1129–1157 (PSTS…SVKT) and 1170–1187 (PCTS…SQVT). Residues 1148–1692 (SRTNRSSVKT…TNRSSVKTPE (545 aa)) are interaction with the PRKDC complex. Thr1157 carries the post-translational modification Phosphothreonine. Thr1198 is subject to Phosphothreonine. A compositionally biased stretch (polar residues) spans 1210-1227 (QPSTSTDRPVTSEPTSHA). A Phosphoserine modification is found at Ser1235. Thr1239 carries the phosphothreonine modification. A compositionally biased stretch (polar residues) spans 1251 to 1268 (QPSTSTDQPVTSEPTYQA). Phosphothreonine is present on residues Thr1280 and Thr1302. Residues 1306 to 1318 (TSRTTRSRTNMSS) show a composition bias toward low complexity. Composition is skewed to polar residues over residues 1334–1350 (PSTS…TSRA) and 1375–1403 (PSTS…SVKT). Positions 1429–1441 (TSRTTRSRTNMSS) are enriched in low complexity. A compositionally biased stretch (polar residues) spans 1457–1473 (PSTSTEQPVTPEPTSRA). Phosphoserine occurs at positions 1481 and 1482. An N6-acetyllysine modification is found at Lys1484. Thr1485 bears the Phosphothreonine mark. Lys1495 participates in a covalent cross-link: Glycyl lysine isopeptide (Lys-Gly) (interchain with G-Cter in SUMO1); alternate. Lys1495 participates in a covalent cross-link: Glycyl lysine isopeptide (Lys-Gly) (interchain with G-Cter in SUMO2); alternate. Polar residues-rich tracts occupy residues 1498-1526 (PSTS…SVKT), 1538-1557 (QPST…QVTR), and 1580-1596 (ASAS…TSRT). A phosphothreonine mark is found at Thr1507 and Thr1548. Phosphothreonine occurs at positions 1615 and 1630. Composition is skewed to polar residues over residues 1620-1649 (QPST…SVKT) and 1661-1678 (QPST…TSRA). Ser1646 is subject to Phosphoserine. Phosphothreonine occurs at positions 1649 and 1671. Ser1686 is subject to Phosphoserine. At Thr1690 the chain carries Phosphothreonine. Pro residues predominate over residues 1693 to 1702 (PVVPTAPEPH). Residues 1706–1718 (STDQPVTPKLTSR) are compositionally biased toward polar residues. Phosphothreonine occurs at positions 1712, 1746, and 1753. Residues 1760–1771 (GGQSKTLRSSTV) are compositionally biased toward polar residues. Ser1763 is modified (phosphoserine). Thr1779 is modified (phosphothreonine). Over residues 1780-1801 (PEFQSPVTTDQPISPEPITQPS) the composition is skewed to polar residues. The interval 1780–2171 (PEFQSPVTTD…VLSPLEMSST (392 aa)) is required for nuclear localization (NLS2). Phosphoserine is present on residues Ser1784 and Ser1793. Lys1822 is covalently cross-linked (Glycyl lysine isopeptide (Lys-Gly) (interchain with G-Cter in SUMO2)). Ser1857 bears the Phosphoserine mark. A Glycyl lysine isopeptide (Lys-Gly) (interchain with G-Cter in SUMO2) cross-link involves residue Lys1872. Thr1882 is subject to Phosphothreonine. Ser1902 bears the Phosphoserine mark. Residues 1905–1918 (HQKQPQRGEVSQKT) are compositionally biased toward polar residues. Lys1922 is covalently cross-linked (Glycyl lysine isopeptide (Lys-Gly) (interchain with G-Cter in SUMO1); alternate). Lys1922 is covalently cross-linked (Glycyl lysine isopeptide (Lys-Gly) (interchain with G-Cter in SUMO2); alternate). The segment covering 1929 to 1939 (AEKPGKEEDVV) has biased composition (basic and acidic residues). Thr1940 is subject to Phosphothreonine. BRCT domains lie at 1974 to 2052 (APKV…EYVV) and 2073 to 2164 (RERR…FVLS). Arg2025 carries the post-translational modification Omega-N-methylarginine.

Homodimer. Interacts with H2AX, which requires phosphorylation of H2AX on 'Ser-139'. Interacts with the MRN complex, composed of MRE11, RAD50, and NBN. Interacts with CHEK2, which requires ATM-mediated phosphorylation of 'Thr-68' within the FHA domain of CHEK2. Interacts constitutively with the BRCA1-BARD1 complex, SMC1A and TP53BP1. Interacts with ATM and FANCD2, and these interactions are reduced upon DNA damage. Also interacts with the PRKDC complex, composed of XRCC6/KU70, XRCC5/KU80 and PRKDC/XRCC7. This interaction may be required for PRKDC autophosphorylation, which is essential for DNA double strand break (DSB) repair. When phosphorylated by ATM, interacts with RNF8 (via FHA domain). Interacts with CEP164. When phosphorylated, interacts with APTX (via FHA-like domain). Interacts (when phosphorylated) with TOPBP1; promoting TOPBP1 localization to DNA damage sites during mitosis. Interacts (when phosphorylated) with NBN; promoting NBN and MRN complex localization to DNA damage sites. Phosphorylated upon exposure to ionizing radiation (IR), ultraviolet radiation (UV), and hydroxyurea (HU). Phosphorylation in response to IR requires ATM, NBN, and possibly CHEK2. Also phosphorylated during the G2/M phase of the cell cycle and during activation of the mitotic spindle checkpoint. Phosphorylation at Thr-4 by ATM stabilizes and enhances homodimerization via the FHA domain. Phosphorylated at Ser-168 and Ser-196 by CK2 in response to DNA damage during mitosis, promoting interaction with TOPBP1. Phosphorylated by CK2 in response to DNA damage, promoting interaction with NBN and recruitment of the MRN complex to DNA damage sites. Post-translationally, sumoylation at Lys-1922 by PIAS4 following DNA damage promotes ubiquitin-mediated degradation. In terms of processing, ubiquitinated by RNF4, leading to proteasomal degradation; undergoes 'Lys-48'-linked polyubiquitination.

It localises to the nucleus. It is found in the chromosome. In terms of biological role, histone reader protein required for checkpoint-mediated cell cycle arrest in response to DNA damage within both the S phase and G2/M phases of the cell cycle. Specifically recognizes and binds histone H2AX phosphorylated at 'Ser-139', a marker of DNA damage, serving as a scaffold for the recruitment of DNA repair and signal transduction proteins to discrete foci of DNA damage sites. Also required for downstream events subsequent to the recruitment of these proteins. These include phosphorylation and activation of the ATM, CHEK1 and CHEK2 kinases, and stabilization of TP53/p53 and apoptosis. ATM and CHEK2 may also be activated independently by a parallel pathway mediated by TP53BP1. Required for chromosomal stability during mitosis by promoting recruitment of TOPBP1 to DNA double strand breaks (DSBs): TOPBP1 forms filamentous assemblies that bridge MDC1 and tether broken chromosomes during mitosis. Required for the repair of DSBs via homologous recombination by promoting recruitment of NBN component of the MRN complex to DSBs. The chain is Mediator of DNA damage checkpoint protein 1 (MDC1) from Pan troglodytes (Chimpanzee).